The sequence spans 1131 residues: Homeobox-DDT domain protein RLT3 (1131 aa).

The homeobox; TALE-type DNA-binding region spans 2–56; the sequence is KRKSPLQVQALEGFYLEQMYPTPKEMEDLGKSLGLTLKEVRGWFKRRRSRGKGVK. The segment covering 239-251 has biased composition (basic residues); it reads LQKRSTEKKRRSI. The disordered stretch occupies residues 239 to 264; the sequence is LQKRSTEKKRRSIHREAELNKDETQR. The segment covering 252-264 has biased composition (basic and acidic residues); sequence HREAELNKDETQR. Residues 365–424 enclose the DDT domain; the sequence is PESVKKLFKVVHFLYTYSVTLDIGPFTLDEFTRAFHDKDSLLLGKIHLSLLKLLLLDVET. The disordered stretch occupies residues 579–609; that stretch reads EDPDKSQSDSDDSGSVDDESDDCSISSGDEI. The span at 587-600 shows a compositional bias: acidic residues; that stretch reads DSDDSGSVDDESDD.

Its subcellular location is the nucleus. In terms of biological role, transcriptional regulator required for the maintenance of the plant vegetative phase. May prevent the early activation of the vegetative-to-reproductive transition by regulating key genes that contribute to flower timing. The polypeptide is Homeobox-DDT domain protein RLT3 (Arabidopsis thaliana (Mouse-ear cress)).